A 303-amino-acid chain; its full sequence is E3 ubiquitin-protein ligase CCNB1IP1 homolog (303 aa).

Residues 3 to 42 (CNACWRELEGQAVSTTCGHLLCTEDAKKILSNDAACPICD) form an RING-type; degenerate zinc finger. Residues 119 to 184 (LEEVHTAYQK…YESAKRSAIQ (66 aa)) adopt a coiled-coil conformation. Residues 201-268 (VPNIMDSSDP…DIRPRQPARP (68 aa)) are disordered.

In terms of assembly, interacts with ZIP4 and PTD. Expressed in young panicles.

It is found in the nucleus. Its subcellular location is the chromosome. The catalysed reaction is S-ubiquitinyl-[E2 ubiquitin-conjugating enzyme]-L-cysteine + [acceptor protein]-L-lysine = [E2 ubiquitin-conjugating enzyme]-L-cysteine + N(6)-ubiquitinyl-[acceptor protein]-L-lysine.. It participates in protein modification; protein ubiquitination. Functionally, ubiquitin E3 ligase required for class I crossover (CO) formation during meiosis. The polypeptide is E3 ubiquitin-protein ligase CCNB1IP1 homolog (Oryza sativa subsp. japonica (Rice)).